The following is a 167-amino-acid chain: Peptide deformylase (167 aa).

The Fe cation site is built by C91 and H133. The active site involves E134. H137 is a binding site for Fe cation.

This sequence belongs to the polypeptide deformylase family. The cofactor is Fe(2+).

It catalyses the reaction N-terminal N-formyl-L-methionyl-[peptide] + H2O = N-terminal L-methionyl-[peptide] + formate. Its function is as follows. Removes the formyl group from the N-terminal Met of newly synthesized proteins. Requires at least a dipeptide for an efficient rate of reaction. N-terminal L-methionine is a prerequisite for activity but the enzyme has broad specificity at other positions. The chain is Peptide deformylase from Neisseria gonorrhoeae (strain ATCC 700825 / FA 1090).